The following is a 173-amino-acid chain: Inorganic pyrophosphatase (173 aa).

Substrate-binding residues include K29, R43, and Y55. D65, D70, and D102 together coordinate Mg(2+). Y141 contacts substrate.

This sequence belongs to the PPase family. In terms of assembly, homohexamer. Mg(2+) is required as a cofactor.

It is found in the cytoplasm. It carries out the reaction diphosphate + H2O = 2 phosphate + H(+). Catalyzes the hydrolysis of inorganic pyrophosphate (PPi) forming two phosphate ions. The protein is Inorganic pyrophosphatase of Rickettsia felis (strain ATCC VR-1525 / URRWXCal2) (Rickettsia azadi).